The primary structure comprises 415 residues: MRLKRFLLRYFPPGIILEYEKGGELKTKAIDLLELSPTTDVDLVVGEIQKAEPLITASRTQQVKQLILRLQEKIGQQDSRQFYLFKVLRAHILPLTNVAFNKSGSSFITGSYDRTCKVWDTASGEELHTLEGHRNVVYAIQFNNPYGDKIATGSFDKTCKLWSAETGKCYHTFRGHTAEIVCLVFNPQSTLIATGSMDTTAKLWDIQSGEEALTLSGHAAEIISLSFNTTGDRLITGSFDHTVSVWEIPSGRRIHTLIGHRGEISSAQFNWDCSLIATASMDKSCKLWDSLNGKCVATLTGHDDEVLDVTFDSTGQLVATASADGTARVYSASSRKCLAKLEGHEGEISKICFNAQGNRIVTASSDKTSRLWDPHTGECLQVLKGHTDEIFSCAFNYEGNTIITGSKDNTCRIWR.

WD repeat units follow at residues 90–129 (AHIL…ELHT), 132–174 (GHRN…HTFR), 175–214 (GHTA…EALT), 217–256 (GHAA…RIHT), 259–298 (GHRG…CVAT), 301–340 (GHDD…CLAK), 343–384 (GHEG…QVLK), and 386–415 (HTDE…RIWR).

Belongs to the WD repeat WDR69 family.

It localises to the cytoplasm. The protein localises to the cytoskeleton. The protein resides in the flagellum basal body. Its subcellular location is the flagellum axoneme. Required for axonemal dynein assembly and ciliary motility in ciliated organs, including Kupffer's vesicle, during embryogenesis. Facilitates the onset of robust cilia motility during development. The sequence is that of Dynein assembly factor with WD repeat domains 1 (daw1) from Xenopus laevis (African clawed frog).